Here is a 318-residue protein sequence, read N- to C-terminus: Aspartate carbamoyltransferase catalytic subunit (318 aa).

Carbamoyl phosphate-binding residues include Arg59 and Thr60. Lys87 serves as a coordination point for L-aspartate. Carbamoyl phosphate contacts are provided by Arg109, His137, and Gln140. The L-aspartate site is built by Arg170 and Arg224. Residues Gly265 and Pro266 each coordinate carbamoyl phosphate.

This sequence belongs to the aspartate/ornithine carbamoyltransferase superfamily. ATCase family. Heterododecamer (2C3:3R2) of six catalytic PyrB chains organized as two trimers (C3), and six regulatory PyrI chains organized as three dimers (R2).

The catalysed reaction is carbamoyl phosphate + L-aspartate = N-carbamoyl-L-aspartate + phosphate + H(+). It functions in the pathway pyrimidine metabolism; UMP biosynthesis via de novo pathway; (S)-dihydroorotate from bicarbonate: step 2/3. Functionally, catalyzes the condensation of carbamoyl phosphate and aspartate to form carbamoyl aspartate and inorganic phosphate, the committed step in the de novo pyrimidine nucleotide biosynthesis pathway. The polypeptide is Aspartate carbamoyltransferase catalytic subunit (Rhizobium etli (strain CIAT 652)).